The primary structure comprises 239 residues: Phosphoribosylaminoimidazole-succinocarboxamide synthase (239 aa).

This sequence belongs to the SAICAR synthetase family.

It carries out the reaction 5-amino-1-(5-phospho-D-ribosyl)imidazole-4-carboxylate + L-aspartate + ATP = (2S)-2-[5-amino-1-(5-phospho-beta-D-ribosyl)imidazole-4-carboxamido]succinate + ADP + phosphate + 2 H(+). The protein operates within purine metabolism; IMP biosynthesis via de novo pathway; 5-amino-1-(5-phospho-D-ribosyl)imidazole-4-carboxamide from 5-amino-1-(5-phospho-D-ribosyl)imidazole-4-carboxylate: step 1/2. In Chlorobium luteolum (strain DSM 273 / BCRC 81028 / 2530) (Pelodictyon luteolum), this protein is Phosphoribosylaminoimidazole-succinocarboxamide synthase.